Here is a 398-residue protein sequence, read N- to C-terminus: MVCVPSSSSVMELANLISQSIPKLQDESPQRANDARGNVIEACSKMLALVTSPAEMLKEMVLINLASLQVINHYQIASVVPLNGHIPISELANKCGLPVDILRRILRQAMTYGAFSEPEPDCIAQTDVSREIPRLSPLLTYQLDVCLPSMVRLLDWLKDVDGEHACAYQIAHDTKDTWWSYASKRPELIENYGKYMALITSGGAHDVSYVLKGFAWEKLGNAVVVDVGGADGFVGISLAKEYPNLAVIVEDNLGLKDSADDNIPQHLKSRVVFLPHSFFKPQSALSRDADVFLLRHILHDWNDNDCRAILQALAASMKPGASILVAEQILQRPGAASWQRERVMRALDMQMMIQFGSKERAYEDWDALFKSVDPPLEIVDCVQPVGSADSFMELKRRA.

Residue D251 participates in S-adenosyl-L-methionine binding. H299 serves as the catalytic Proton acceptor.

Belongs to the class I-like SAM-binding methyltransferase superfamily. Cation-independent O-methyltransferase family.

In terms of biological role, O-methyltransferase; part of the gene cluster that mediates the biosynthesis of a methylated derivative of known natural products orthosporin and diaporthin. Seems not to be involved in the biosynthesis of the identified final product of the pathway and its function has still to be determined. The polypeptide is O-methyltransferase aoiO (Aspergillus oryzae (strain ATCC 42149 / RIB 40) (Yellow koji mold)).